Here is a 426-residue protein sequence, read N- to C-terminus: Mitogen-activated protein kinase 8 (426 aa).

In terms of domain architecture, Protein kinase spans 26–321 (YQNLKPIGSG…VDDALQHPYI (296 aa)). ATP-binding positions include 33–38 (GSGAQG) and K55. The Proton acceptor role is filled by D151. T183 is subject to Phosphothreonine. The short motif at 183–185 (TPY) is the TXY element. A Phosphotyrosine modification is found at Y185. Positions 375–426 (QPAPLGAAVTDGSQAHTSSSSGDASSMSTDPTLPSDTDSSLETSAGTLGCCR) are disordered. Positions 384 to 404 (TDGSQAHTSSSSGDASSMSTD) are enriched in low complexity. Over residues 405–420 (PTLPSDTDSSLETSAG) the composition is skewed to polar residues.

This sequence belongs to the protein kinase superfamily. CMGC Ser/Thr protein kinase family. MAP kinase subfamily. The cofactor is Mg(2+). Dually phosphorylated on Thr-183 and Tyr-185, which activates the enzyme. Strongly expressed in presumptive ectoderm and mesoderm regions and weakly expressed in endoderm regions during early stages of embryo development. Expressed in the head and dorsal regions during neurula and tailbud stages.

It is found in the cytoplasm. It localises to the nucleus. The protein localises to the synapse. The enzyme catalyses L-seryl-[protein] + ATP = O-phospho-L-seryl-[protein] + ADP + H(+). It catalyses the reaction L-threonyl-[protein] + ATP = O-phospho-L-threonyl-[protein] + ADP + H(+). Its activity is regulated as follows. Activated by threonine and tyrosine phosphorylation, potentially by the dual-specificity kinase, MKK7. Indirectly activated by Wnt5a. Its function is as follows. Responds to activation by environmental stress and pro-inflammatory cytokines by phosphorylating a number of transcription factors, and thus regulating transcriptional activity. Regulates morphogenic cell movements, controlling convergent extension during gastrulation. May play a role in the regulation of the circadian clock. This Xenopus laevis (African clawed frog) protein is Mitogen-activated protein kinase 8 (mapk8).